The sequence spans 667 residues: DNA ligase (667 aa).

NAD(+) is bound by residues 34-38 (DYEFD), 83-84 (SL), and glutamate 117. Catalysis depends on lysine 119, which acts as the N6-AMP-lysine intermediate. NAD(+) contacts are provided by arginine 140, glutamate 176, lysine 289, and lysine 313. The Zn(2+) site is built by cysteine 407, cysteine 410, cysteine 425, and cysteine 431. The 77-residue stretch at 591-667 (QVNRNFEGMS…ISEDEFMGMM (77 aa)) folds into the BRCT domain.

Belongs to the NAD-dependent DNA ligase family. LigA subfamily. Mg(2+) serves as cofactor. Mn(2+) is required as a cofactor.

It carries out the reaction NAD(+) + (deoxyribonucleotide)n-3'-hydroxyl + 5'-phospho-(deoxyribonucleotide)m = (deoxyribonucleotide)n+m + AMP + beta-nicotinamide D-nucleotide.. In terms of biological role, DNA ligase that catalyzes the formation of phosphodiester linkages between 5'-phosphoryl and 3'-hydroxyl groups in double-stranded DNA using NAD as a coenzyme and as the energy source for the reaction. It is essential for DNA replication and repair of damaged DNA. The chain is DNA ligase from Chlorobium chlorochromatii (strain CaD3).